Consider the following 279-residue polypeptide: Nitrogenase vanadium-iron protein alpha chain (279 aa).

[8Fe-7S] cluster is bound by residues Cys5, Cys31, and Cys94. Cys213 contacts [7Fe-V-9S-C-homocitryl] cluster.

Belongs to the NifD/NifK/NifE/NifN family. Hexamer of two alpha, two beta, and two delta chains. Requires [8Fe-7S] cluster as cofactor. The cofactor is [7Fe-V-9S-C-homocitryl] cluster.

It carries out the reaction N2 + 8 reduced [2Fe-2S]-[ferredoxin] + 16 ATP + 16 H2O = H2 + 8 oxidized [2Fe-2S]-[ferredoxin] + 2 NH4(+) + 16 ADP + 16 phosphate + 6 H(+). This vanadium-iron protein is part of the nitrogenase complex that catalyzes the key enzymatic reactions in nitrogen fixation. The protein is Nitrogenase vanadium-iron protein alpha chain (vnfD) of Azotobacter salinestris.